A 401-amino-acid chain; its full sequence is S-adenosylmethionine synthase (401 aa).

Histidine 16 is a binding site for ATP. Mg(2+) is bound at residue aspartate 18. Residue glutamate 44 participates in K(+) binding. Glutamate 57 and glutamine 109 together coordinate L-methionine. Residues 109–119 (QSAHIAQGVDA) form a flexible loop region. Residues 174–176 (DAK), aspartate 251, 257–258 (RK), alanine 274, and lysine 278 each bind ATP. Aspartate 251 provides a ligand contact to L-methionine. Lysine 282 is an L-methionine binding site.

This sequence belongs to the AdoMet synthase family. Homotetramer; dimer of dimers. Mg(2+) serves as cofactor. Requires K(+) as cofactor.

Its subcellular location is the cytoplasm. It catalyses the reaction L-methionine + ATP + H2O = S-adenosyl-L-methionine + phosphate + diphosphate. Its pathway is amino-acid biosynthesis; S-adenosyl-L-methionine biosynthesis; S-adenosyl-L-methionine from L-methionine: step 1/1. Functionally, catalyzes the formation of S-adenosylmethionine (AdoMet) from methionine and ATP. The overall synthetic reaction is composed of two sequential steps, AdoMet formation and the subsequent tripolyphosphate hydrolysis which occurs prior to release of AdoMet from the enzyme. This is S-adenosylmethionine synthase from Novosphingobium aromaticivorans (strain ATCC 700278 / DSM 12444 / CCUG 56034 / CIP 105152 / NBRC 16084 / F199).